The following is a 195-amino-acid chain: Imidazole glycerol phosphate synthase subunit HisH (195 aa).

In terms of domain architecture, Glutamine amidotransferase type-1 spans 1–195; sequence MIAVVDLGIG…LRLLENFRRL (195 aa). Cysteine 72 functions as the Nucleophile in the catalytic mechanism. Active-site residues include histidine 177 and glutamate 179.

Heterodimer of HisH and HisF.

It localises to the cytoplasm. The catalysed reaction is 5-[(5-phospho-1-deoxy-D-ribulos-1-ylimino)methylamino]-1-(5-phospho-beta-D-ribosyl)imidazole-4-carboxamide + L-glutamine = D-erythro-1-(imidazol-4-yl)glycerol 3-phosphate + 5-amino-1-(5-phospho-beta-D-ribosyl)imidazole-4-carboxamide + L-glutamate + H(+). It catalyses the reaction L-glutamine + H2O = L-glutamate + NH4(+). It participates in amino-acid biosynthesis; L-histidine biosynthesis; L-histidine from 5-phospho-alpha-D-ribose 1-diphosphate: step 5/9. Its function is as follows. IGPS catalyzes the conversion of PRFAR and glutamine to IGP, AICAR and glutamate. The HisH subunit catalyzes the hydrolysis of glutamine to glutamate and ammonia as part of the synthesis of IGP and AICAR. The resulting ammonia molecule is channeled to the active site of HisF. The polypeptide is Imidazole glycerol phosphate synthase subunit HisH (Thermococcus kodakarensis (strain ATCC BAA-918 / JCM 12380 / KOD1) (Pyrococcus kodakaraensis (strain KOD1))).